A 280-amino-acid polypeptide reads, in one-letter code: Putative S-adenosyl-L-methionine-dependent methyltransferase FRAAL3836 (280 aa).

Residues Asp121 and 150-151 contribute to the S-adenosyl-L-methionine site; that span reads DL.

It belongs to the UPF0677 family.

In terms of biological role, exhibits S-adenosyl-L-methionine-dependent methyltransferase activity. The protein is Putative S-adenosyl-L-methionine-dependent methyltransferase FRAAL3836 of Frankia alni (strain DSM 45986 / CECT 9034 / ACN14a).